A 551-amino-acid polypeptide reads, in one-letter code: PA-phosphatase related-family protein DDB_G0268928 (551 aa).

2 stretches are compositionally biased toward polar residues: residues 26–47 and 137–152; these read TESL…SGKD and KYNT…SSNK. Disordered stretches follow at residues 26–50 and 123–172; these read TESL…DYSS and KGED…NNNN. The segment covering 153–171 has biased composition (low complexity); that stretch reads TQTTVLNNSTTSSNNINNN. The next 7 helical transmembrane spans lie at 211–231, 232–252, 273–293, 346–366, 393–413, 474–494, and 500–520; these read SYSD…SIIY, SLLV…LVFI, LAVG…AVVL, ILQL…IYIL, MFIC…LIFP, ILPA…IATM, and YFVD…YGGF.

Belongs to the PA-phosphatase related phosphoesterase family.

Its subcellular location is the membrane. This Dictyostelium discoideum (Social amoeba) protein is PA-phosphatase related-family protein DDB_G0268928.